We begin with the raw amino-acid sequence, 814 residues long: E3 ubiquitin-protein ligase TRIM71 (814 aa).

Residues 12-76 form an RING-type zinc finger; sequence CPLCKEMCVS…SLQLRCPVCD (65 aa). Residues 111–146 are disordered; it reads QQQSNGGRTASNRQRSASCSSSGLLRRAPPSQSEPR. Over residues 120–138 the composition is skewed to low complexity; the sequence is ASNRQRSASCSSSGLLRRA. Residues 142–189 form a B box-type 1; atypical zinc finger; that stretch reads QSEPRCSSCDDGNGASSHCLDCQENLCDNCLRAHQRVRLTKDHFIERF. 8 residues coordinate Zn(2+): cysteine 147, cysteine 150, cysteine 171, histidine 175, cysteine 224, histidine 227, cysteine 247, and histidine 252. The B box-type 2 zinc finger occupies 219 to 260; sequence PERLYCQQHDEEVLHFYCDSCSVPICRECTMGRHAGHSFVYL. Positions 282 to 370 form a coiled coil; sequence RQAIQLSLEQ…INAVQQVLEE (89 aa). The Filamin repeat unit spans residues 425 to 526; sequence SSGAFAALTK…IENSPFKVNV (102 aa). 6 NHL repeats span residues 539-582, 586-629, 633-676, 680-723, 727-770, and 774-814; these read TLSF…FKPC, HHKF…FTFE, LLKF…FGPD, LNKY…IKPD, AHFL…FEPN, and LCKF…ILAF.

It belongs to the TRIM/RBCC family.

The protein localises to the cytoplasm. It is found in the P-body. It carries out the reaction S-ubiquitinyl-[E2 ubiquitin-conjugating enzyme]-L-cysteine + [acceptor protein]-L-lysine = [E2 ubiquitin-conjugating enzyme]-L-cysteine + N(6)-ubiquitinyl-[acceptor protein]-L-lysine.. It functions in the pathway protein modification; protein ubiquitination. Its function is as follows. E3 ubiquitin-protein ligase that cooperates with the microRNAs (miRNAs) machinery and promotes embryonic stem cells proliferation and maintenance. Binds to miRNAs and participates in post-transcriptional repression of transcripts. Required to maintain proliferation and prevent premature differentiation of neural progenitor cells during early neural development. This is E3 ubiquitin-protein ligase TRIM71 (trim71) from Xenopus tropicalis (Western clawed frog).